The sequence spans 516 residues: Cysteine--tRNA ligase (516 aa).

Zn(2+) is bound at residue C34. The short motif at 36 to 46 (PTVYNFAHLGN) is the 'HIGH' region element. Residues C225, H250, and E254 each coordinate Zn(2+). The 'KMSKS' region signature appears at 285–289 (KMSKS). K288 provides a ligand contact to ATP.

The protein belongs to the class-I aminoacyl-tRNA synthetase family. In terms of assembly, monomer. Requires Zn(2+) as cofactor.

It localises to the cytoplasm. It catalyses the reaction tRNA(Cys) + L-cysteine + ATP = L-cysteinyl-tRNA(Cys) + AMP + diphosphate. In Zymomonas mobilis subsp. mobilis (strain ATCC 31821 / ZM4 / CP4), this protein is Cysteine--tRNA ligase.